The sequence spans 339 residues: Annexin A2 (339 aa).

N-acetylserine is present on Ser2. The S100A10-binding site stretch occupies residues 2 to 24 (STVHEILCKLSLEGDHSTPPSAY). Tyr24 is modified (phosphotyrosine; by SRC). A Phosphoserine; by PKC modification is found at Ser26. Annexin repeat units lie at residues 33–104 (FDAE…GLLK) and 105–176 (TPAQ…ALAK). Position 49 is an N6-acetyllysine; alternate (Lys49). A Glycyl lysine isopeptide (Lys-Gly) (interchain with G-Cter in SUMO1); alternate cross-link involves residue Lys49. A Glycyl lysine isopeptide (Lys-Gly) (interchain with G-Cter in SUMO2); alternate cross-link involves residue Lys49. N6-acetyllysine is present on Lys152. At Ser184 the chain carries Phosphoserine. Annexin repeat units follow at residues 189 to 261 (ELID…NLVQ) and 265 to 336 (NKPL…YLCG). Tyr199 carries the post-translational modification Phosphotyrosine. N6-acetyllysine is present on Lys227.

It belongs to the annexin family. In terms of assembly, heterotetramer containing 2 light chains of S100A10/p11 and 2 heavy chains of ANXA2/p36. Interacts with ATP1B1. Interacts with DYSF. Interacts with COCH. Interacts (via repeat Annexin 1) with PCSK9 (via the C-terminal domain); the interaction inhibits the degradation of LDLR. Interacts with CEACAM1 (via the cytoplasmic domain); this interaction is regulated by phosphorylation of CEACAM1. Interacts with APPL2 and APPL1; targets APPL2 to endosomes and acting in parallel to RAB5A. Interacts with S100A4. May interact with UBAP2. Interacts with PLEKHG4B; this interaction is required for PLEKHG4B localization to cell-cell adhesions. In terms of processing, ISGylated.

The protein localises to the secreted. Its subcellular location is the extracellular space. It localises to the extracellular matrix. The protein resides in the basement membrane. It is found in the melanosome. Its function is as follows. Calcium-regulated membrane-binding protein whose affinity for calcium is greatly enhanced by anionic phospholipids. It binds two calcium ions with high affinity. May be involved in heat-stress response. Inhibits PCSK9-enhanced LDLR degradation, probably reduces PCSK9 protein levels via a translational mechanism but also competes with LDLR for binding with PCSK9. Binds to endosomes damaged by phagocytosis of particulate wear debris and participates in endosomal membrane stabilization, thereby limiting NLRP3 inflammasome activation. Required for endothelial cell surface plasmin generation and may support fibrinolytic surveillance and neoangiogenesis. This chain is Annexin A2 (ANXA2), found in Bos taurus (Bovine).